The primary structure comprises 440 residues: UPF0489 protein C5orf22 homolog (440 aa).

Residues 187–207 form a disordered region; that stretch reads VEGSSSGIQSSTSESSEDGLM. Residues 188–200 show a composition bias toward low complexity; sequence EGSSSGIQSSTSE.

The protein belongs to the UPF0489 family.

The chain is UPF0489 protein C5orf22 homolog from Xenopus tropicalis (Western clawed frog).